Reading from the N-terminus, the 279-residue chain is uncharacterized protein (279 aa).

3 helical membrane passes run 31 to 51 (GYIA…FHAT), 67 to 87 (LLSI…AKII), and 115 to 135 (EITG…SLAL).

Belongs to the transketolase family. Thiamine diphosphate is required as a cofactor.

Its subcellular location is the cell membrane. This is an uncharacterized protein from Sinorhizobium fredii (strain NBRC 101917 / NGR234).